The primary structure comprises 268 residues: Microtubule-associated protein RP/EB family member 1 (268 aa).

At alanine 2 the chain carries N-acetylalanine. Residues 14-116 (NLSRHDMLAW…FVQWFKKFFD (103 aa)) form the Calponin-homology (CH) domain. N6-crotonyllysine is present on lysine 66. Tyrosine 124 carries the phosphotyrosine modification. Residues 124 to 268 (YDPVAARQGQ…GGPQEEQEEY (145 aa)) are interaction with MTUS2/TIP150. The interval 146-187 (LNKPKKPLTSSSAAPQRPISTQRTAAAPKAGPGVVRKNPGVG) is disordered. Residues 153–169 (LTSSSAAPQRPISTQRT) show a composition bias toward polar residues. Phosphoserine occurs at positions 155 and 165. In terms of domain architecture, EB1 C-terminal spans 185-255 (GVGNGDDEAA…LYATDEGFVI (71 aa)). An interaction with CDK5RAP2 region spans residues 185–268 (GVGNGDDEAA…GGPQEEQEEY (84 aa)). The interval 206–211 (TVEDLE) is interaction with APC. A DCTN1-binding region spans residues 208–268 (EDLEKERDFY…GGPQEEQEEY (61 aa)). Lysine 220 bears the N6-acetyllysine mark. The APC-binding stretch occupies residues 220–242 (KLRNIELICQENEGENDPVLQRI). The interval 232-255 (EGENDPVLQRIVDILYATDEGFVI) is interaction with SKA1.

Belongs to the MAPRE family. As to quaternary structure, homodimer. Heterodimer with MAPRE3. Interacts with DCTN1, DCTN2, TERF1 and dynein intermediate chain. Interaction with DIAPH1 and DIAPH2. Interacts (via C-terminal residues 206-211) with APC (via C-terminal residues 2674-2843); the interaction inhibits association with and bundling of F-actin. Interacts with CLASP2, DST, KIF2C and STIM1; probably required for their targeting to the growing microtubule plus ends. Interacts with MTUS2; interaction is direct and probably targets MTUS2 to microtubules. Interacts (via C-terminus) with SKA1 (via SXIP motif); the interaction is direct and stabilizes the kinetochore-microtubule attachment of the SKA1 complex. Interacts with APC2. Interacts with CLASP1. Interacts with CDK5RAP2. Interacts with MACF1. Interacts with RABL2/RABL2A; binds preferentially to GTP-bound RABL2. Interacts with KCNAB2. Interacts (via C-terminus) with CLIP1. Interacts with SLAIN2 and SLAIN1. Interacts with KIF18B; this interaction is required for efficient accumulation of KIF18B at microtubule plus ends. Interacts with MISP. Interacts with KNSTRN. Interacts with NCKAP5L. Interacts with CAMSAP2. Interacts with PDE4DIP isoform 13/MMG8/SMYLE; this interaction is required for its recruitment to the Golgi apparatus. Forms a pericentrosomal complex with AKAP9, CDK5RAP2 and PDE4DIP isoform 13/MMG8/SMYLE; within this complex, MAPRE1 binding to CDK5RAP2 may be mediated by PDE4DIP. Interacts with AKNA. Interacts with GAS2L1, GAS2L2, and GAS2L3. Interacts with RARRES1 and AGBL2. Acetylation at Lys-220 by KAT2B/PCAF promotes dynamic kinetochore-microtubule interactions in early mitosis. Post-translationally, crotonylated by KAT5 during mitosis, promoting astral microtubule plasticity and dynamic connection between astral microtubules and the cortex during mitotic chromosome segregation, thereby ensuring accurate spindle positioning in mitosis. Decrotonylated by HDAC3. Ubiquitously expressed.

Its subcellular location is the cytoplasm. It localises to the cytoskeleton. It is found in the microtubule organizing center. The protein localises to the centrosome. The protein resides in the golgi apparatus. Its subcellular location is the spindle. It localises to the spindle pole. Functionally, plus-end tracking protein (+TIP) that binds to the plus-end of microtubules and regulates the dynamics of the microtubule cytoskeleton. Recruits other +TIP proteins to microtubules by binding to a conserved Ser-X-Leu-Pro (SXLP) motif in their polypeptide chains. Promotes cytoplasmic microtubule nucleation and elongation. Involved in mitotic spindle positioning by stabilizing microtubules and promoting dynamic connection between astral microtubules and the cortex during mitotic chromosome segregation. Assists chromosome alignment in metaphase by recruiting the SKA complex to the spindle and stabilizing its interactions with microtubule bundles (K-fibers). Also acts as a regulator of minus-end microtubule organization: interacts with the complex formed by AKAP9 and PDE4DIP, leading to recruit CAMSAP2 to the Golgi apparatus, thereby tethering non-centrosomal minus-end microtubules to the Golgi, an important step for polarized cell movement. Promotes elongation of CAMSAP2-decorated microtubule stretches on the minus-end of microtubules. Acts as a regulator of autophagosome transport via interaction with CAMSAP2. Functions downstream of Rho GTPases and DIAPH1 in stable microtubule formation. May play a role in cell migration. This chain is Microtubule-associated protein RP/EB family member 1, found in Homo sapiens (Human).